The chain runs to 72 residues: Translation initiation factor IF-1 (72 aa).

Positions 1-72 (MSKEEAIEVE…TRGRITYRAK (72 aa)) constitute an S1-like domain.

The protein belongs to the IF-1 family. Component of the 30S ribosomal translation pre-initiation complex which assembles on the 30S ribosome in the order IF-2 and IF-3, IF-1 and N-formylmethionyl-tRNA(fMet); mRNA recruitment can occur at any time during PIC assembly.

Its subcellular location is the cytoplasm. One of the essential components for the initiation of protein synthesis. Stabilizes the binding of IF-2 and IF-3 on the 30S subunit to which N-formylmethionyl-tRNA(fMet) subsequently binds. Helps modulate mRNA selection, yielding the 30S pre-initiation complex (PIC). Upon addition of the 50S ribosomal subunit IF-1, IF-2 and IF-3 are released leaving the mature 70S translation initiation complex. The polypeptide is Translation initiation factor IF-1 (Geobacter sulfurreducens (strain ATCC 51573 / DSM 12127 / PCA)).